The chain runs to 261 residues: Hemin import ATP-binding protein HmuV (261 aa).

Residues 5-241 form the ABC transporter domain; sequence YTAENLTFTR…DALAHWYGAQ (237 aa). ATP is bound at residue 37-44; it reads GPNGAGKS.

Belongs to the ABC transporter superfamily. Heme (hemin) importer (TC 3.A.1.14.5) family. As to quaternary structure, the complex is composed of two ATP-binding proteins (HmuV), two transmembrane proteins (HmuU) and a solute-binding protein (HmuT).

It localises to the cell inner membrane. Functionally, part of the ABC transporter complex HmuTUV involved in hemin import. Responsible for energy coupling to the transport system. In Enterobacter cloacae, this protein is Hemin import ATP-binding protein HmuV.